The primary structure comprises 446 residues: Histidine--tRNA ligase (446 aa).

Belongs to the class-II aminoacyl-tRNA synthetase family. Homodimer.

The protein resides in the cytoplasm. It catalyses the reaction tRNA(His) + L-histidine + ATP = L-histidyl-tRNA(His) + AMP + diphosphate + H(+). This chain is Histidine--tRNA ligase, found in Paraburkholderia phymatum (strain DSM 17167 / CIP 108236 / LMG 21445 / STM815) (Burkholderia phymatum).